Reading from the N-terminus, the 468-residue chain is Membrane-associated tyrosine- and threonine-specific cdc2-inhibitory kinase wee-1.1 (468 aa).

Over residues 25 to 42 (SKDEPNKLNTSRKLEVTT) the composition is skewed to basic and acidic residues. The segment at 25-63 (SKDEPNKLNTSRKLEVTTKKNQSNNKKRPPPINKARKSL) is disordered. The segment covering 49-61 (NKKRPPPINKARK) has biased composition (basic residues). The 252-residue stretch at 106-357 (FNFDKNLGKG…SELMKNHVVK (252 aa)) folds into the Protein kinase domain. Residues 112-120 (LGKGSFGEV) and K135 contribute to the ATP site. The active-site Proton acceptor is the D224. N229 and D242 together coordinate Mg(2+). The disordered stretch occupies residues 425–453 (EDEYEVFSPPRTPVKKSRYQQTMPEVSPP).

Belongs to the protein kinase superfamily. Ser/Thr protein kinase family. WEE1 subfamily. In the 12-13-cell embryo, expressed in the E blastomere. In the 16-cell embryo, expressed in the eight AB cells.

Its subcellular location is the nucleus. It carries out the reaction L-seryl-[protein] + ATP = O-phospho-L-seryl-[protein] + ADP + H(+). The catalysed reaction is L-threonyl-[protein] + ATP = O-phospho-L-threonyl-[protein] + ADP + H(+). Functionally, acts as a negative regulator of entry into mitosis (G2 to M transition) by phosphorylation of the CDK1 kinase. This chain is Membrane-associated tyrosine- and threonine-specific cdc2-inhibitory kinase wee-1.1 (wee-1.1), found in Caenorhabditis elegans.